Here is a 204-residue protein sequence, read N- to C-terminus: Transcription factor bHLH120 (204 aa).

Disordered stretches follow at residues 1-27 and 93-116; these read MNPS…KKEK and KREI…RSEP. Positions 26–78 constitute a bHLH domain; the sequence is EKKLLHRNIERQRRQEMAILFASLRSQLPLKYIKGKRAMSDHVNGAVSFIKDT.

In terms of assembly, homodimer.

Its subcellular location is the nucleus. This Arabidopsis thaliana (Mouse-ear cress) protein is Transcription factor bHLH120 (BHLH120).